The primary structure comprises 206 residues: Large ribosomal subunit protein uL4 (206 aa).

A disordered region spans residues 46–77 (GTRAQKDREQVRHSTKKPFKQKGTGRARAGMT). A compositionally biased stretch (basic residues) spans 58–70 (HSTKKPFKQKGTG).

The protein belongs to the universal ribosomal protein uL4 family. Part of the 50S ribosomal subunit.

Its function is as follows. One of the primary rRNA binding proteins, this protein initially binds near the 5'-end of the 23S rRNA. It is important during the early stages of 50S assembly. It makes multiple contacts with different domains of the 23S rRNA in the assembled 50S subunit and ribosome. Forms part of the polypeptide exit tunnel. This is Large ribosomal subunit protein uL4 from Polaromonas naphthalenivorans (strain CJ2).